We begin with the raw amino-acid sequence, 192 residues long: Phosphoheptose isomerase (192 aa).

Residues 37–192 enclose the SIS domain; the sequence is LADSFKGGGK…IQLIEKEMVK (156 aa). Position 52-54 (52-54) interacts with substrate; it reads NGG. Positions 61 and 65 each coordinate Zn(2+). Substrate is bound by residues E65, 93 to 94, 119 to 121, S124, and Q172; these read ND and STS. Zn(2+) is bound by residues Q172 and H180.

Belongs to the SIS family. GmhA subfamily. In terms of assembly, homotetramer. Zn(2+) serves as cofactor.

The protein localises to the cytoplasm. It catalyses the reaction 2 D-sedoheptulose 7-phosphate = D-glycero-alpha-D-manno-heptose 7-phosphate + D-glycero-beta-D-manno-heptose 7-phosphate. It functions in the pathway carbohydrate biosynthesis; D-glycero-D-manno-heptose 7-phosphate biosynthesis; D-glycero-alpha-D-manno-heptose 7-phosphate and D-glycero-beta-D-manno-heptose 7-phosphate from sedoheptulose 7-phosphate: step 1/1. Its function is as follows. Catalyzes the isomerization of sedoheptulose 7-phosphate in D-glycero-D-manno-heptose 7-phosphate. In Escherichia coli O7:K1 (strain IAI39 / ExPEC), this protein is Phosphoheptose isomerase.